The primary structure comprises 227 residues: uncharacterized protein (227 aa).

A run of 5 helical transmembrane segments spans residues 27–47 (AVLPGILIIVFIETGLLFPLL), 63–83 (PAPPVTIGVLAPCVALVAVLG), 126–146 (TIILARFVPIARTFVPVIAGV), 153–173 (VFLGFDIVGGVAWGAGVTLAG), and 186–206 (FQLIILAIVFVSLLPALVSAA).

This sequence belongs to the DedA family.

The protein localises to the cell membrane. This is an uncharacterized protein from Mycobacterium tuberculosis (strain CDC 1551 / Oshkosh).